A 269-amino-acid polypeptide reads, in one-letter code: Nitrogen regulatory protein DAL80 (269 aa).

Residues Cys-31–Cys-55 form a GATA-type zinc finger.

The protein localises to the nucleus. Negative regulator of multiple nitrogen catabolic genes including the allantoin pathway genes. This is Nitrogen regulatory protein DAL80 (DAL80) from Saccharomyces cerevisiae (strain ATCC 204508 / S288c) (Baker's yeast).